Reading from the N-terminus, the 426-residue chain is Gamma-glutamyl phosphate reductase (426 aa).

This sequence belongs to the gamma-glutamyl phosphate reductase family.

It localises to the cytoplasm. The catalysed reaction is L-glutamate 5-semialdehyde + phosphate + NADP(+) = L-glutamyl 5-phosphate + NADPH + H(+). The protein operates within amino-acid biosynthesis; L-proline biosynthesis; L-glutamate 5-semialdehyde from L-glutamate: step 2/2. Catalyzes the NADPH-dependent reduction of L-glutamate 5-phosphate into L-glutamate 5-semialdehyde and phosphate. The product spontaneously undergoes cyclization to form 1-pyrroline-5-carboxylate. This Acidovorax ebreus (strain TPSY) (Diaphorobacter sp. (strain TPSY)) protein is Gamma-glutamyl phosphate reductase.